Here is a 253-residue protein sequence, read N- to C-terminus: Imidazole glycerol phosphate synthase subunit HisF (253 aa).

Residues Asp-11 and Asp-130 contribute to the active site.

This sequence belongs to the HisA/HisF family. Heterodimer of HisH and HisF.

Its subcellular location is the cytoplasm. The catalysed reaction is 5-[(5-phospho-1-deoxy-D-ribulos-1-ylimino)methylamino]-1-(5-phospho-beta-D-ribosyl)imidazole-4-carboxamide + L-glutamine = D-erythro-1-(imidazol-4-yl)glycerol 3-phosphate + 5-amino-1-(5-phospho-beta-D-ribosyl)imidazole-4-carboxamide + L-glutamate + H(+). It participates in amino-acid biosynthesis; L-histidine biosynthesis; L-histidine from 5-phospho-alpha-D-ribose 1-diphosphate: step 5/9. IGPS catalyzes the conversion of PRFAR and glutamine to IGP, AICAR and glutamate. The HisF subunit catalyzes the cyclization activity that produces IGP and AICAR from PRFAR using the ammonia provided by the HisH subunit. This Methylibium petroleiphilum (strain ATCC BAA-1232 / LMG 22953 / PM1) protein is Imidazole glycerol phosphate synthase subunit HisF.